Consider the following 329-residue polypeptide: Malate dehydrogenase (329 aa).

NAD(+) is bound at residue 12–18 (GAAGQIG). Positions 93 and 99 each coordinate substrate. NAD(+) is bound by residues Asn-106, Gln-113, and 130–132 (VGN). Substrate contacts are provided by Asn-132 and Arg-163. The active-site Proton acceptor is the His-188.

This sequence belongs to the LDH/MDH superfamily. MDH type 2 family.

It catalyses the reaction (S)-malate + NAD(+) = oxaloacetate + NADH + H(+). In terms of biological role, catalyzes the reversible oxidation of malate to oxaloacetate. The polypeptide is Malate dehydrogenase (Streptomyces griseus subsp. griseus (strain JCM 4626 / CBS 651.72 / NBRC 13350 / KCC S-0626 / ISP 5235)).